The sequence spans 527 residues: Protein Lilipod (527 aa).

The Extracellular portion of the chain corresponds to 1–22 (MDEEEEEEVTDLKLQLFHNTVR). Residues 23 to 43 (EHIIFLLLIILLYSSSYVVVS) traverse the membrane as a helical segment. Residues 44–65 (RFRRRDRDDLYSNDEDEVLVYR) are Cytoplasmic-facing. A helical transmembrane segment spans residues 66–86 (ISFWLCTFTLAVAEGAAMLLP). Residues 87–117 (VSIASNEVLLLYPNSYYVKWLNSSLIQGLWN) are Extracellular-facing. The helical transmembrane segment at 118–138 (HVFLFSNLSLFIFLPFVYLFS) threads the bilayer. The Cytoplasmic segment spans residues 139-160 (ESTGFVGNKKGILPRVYETFTV). The helical transmembrane segment at 161-181 (FMLMAIIVLVLTAVLSAVFGI) threads the bilayer. Over 182-194 (EKLQFFWFLNLGS) the chain is Extracellular. A helical transmembrane segment spans residues 195-215 (VHLPFLYSCVSFLGVMLMLIC). Residues 216–341 (TPYGFVRLFG…LRTSSTFQRT (126 aa)) lie on the Cytoplasmic side of the membrane. A helical transmembrane segment spans residues 342–362 (FVYPLAMLLLLFCTAVTILLV). Residues 363-395 (VQNTLELLIGIKALPLSTRQFALGISSLSKLGP) are Extracellular-facing. A helical membrane pass occupies residues 396–416 (FGAGLEVCLIFYLGATSVVGF). Residues 417 to 433 (YSMPFMRKVCPKRRQTS) lie on the Cytoplasmic side of the membrane. Residues 434-454 (LPQLMLNCGFMLVLSSALPLL) traverse the membrane as a helical segment. Residues 455-468 (SRIIGITNFDLLGD) lie on the Extracellular side of the membrane. Residues 469-489 (FGAIEWLGNFQIVLLYNLVFG) form a helical membrane-spanning segment. The Cytoplasmic portion of the chain corresponds to 490 to 527 (TTTALCLANKFTATVRRELRARLVENYVLFTNYISFIN).

The protein belongs to the LIMR family. In the ovary, detected in germline stem cells and their progeny. Also detected in the somatic follicular epithelium.

The protein resides in the cell membrane. Functionally, required during oogenesis to promote self-renewal of germline stem cells, probably by enhancing BMP signaling activity. This Drosophila melanogaster (Fruit fly) protein is Protein Lilipod.